An 898-amino-acid chain; its full sequence is Serine/threonine-protein kinase TAO3 (898 aa).

The Protein kinase domain maps to 24 to 277 (FIDLHEIGHG…AAELLRHDFI (254 aa)). Residues 30-38 (IGHGSFGAV) and lysine 53 each bind ATP. Aspartate 147 functions as the Proton acceptor in the catalytic mechanism. Disordered regions lie at residues 316–372 (TRNG…EVMD) and 405–424 (DEAG…SVQS). A phosphoserine mark is found at serine 324, serine 331, serine 343, serine 346, and serine 349. Positions 349–366 (SIPSVSVSTGSRSSSVNS) are enriched in low complexity. Threonine 357 carries the phosphothreonine modification. Serine 359 is modified (phosphoserine). A compositionally biased stretch (basic and acidic residues) spans 405 to 416 (DEAGHGDPRPEP). Position 442 is a phosphoserine (serine 442). Coiled coils occupy residues 452–502 (EQEN…THAN), 548–649 (FLES…HAML), and 753–871 (ILKT…QERE). The disordered stretch occupies residues 565-596 (EEMNEDHSTPKKEKQERISKHKENLQHTQAEE). The residue at position 830 (lysine 830) is an N6-acetyllysine.

Belongs to the protein kinase superfamily. STE Ser/Thr protein kinase family. STE20 subfamily. In terms of assembly, self-associates. Interacts with ERN1 and TRAF2. Interaction with TRAF2 is facilitated under ER stress conditions, such as treatment with tunicamycin, and may promote TRAF2 phosphorylation. Interacts (via N-terminus) with STK25; the interaction promotes STK25 abundance at the level of protein expression and/or stability. In terms of processing, autophosphorylated. Phosphorylation at Ser-324 by ATM following DNA damage is required for activation of the p38/MAPK14 stress-activated MAPK cascade. Phosphorylated at Ser-324 and on Tyr residues during T cell activation. Phosphorylated by LRRK2. As to expression, ubiquitously expressed, with a higher expression in the retina.

Its subcellular location is the cytoplasm. It is found in the cell membrane. The protein localises to the membrane raft. It localises to the lipid droplet. It carries out the reaction L-seryl-[protein] + ATP = O-phospho-L-seryl-[protein] + ADP + H(+). The catalysed reaction is L-threonyl-[protein] + ATP = O-phospho-L-threonyl-[protein] + ADP + H(+). Functionally, serine/threonine-protein kinase that acts as a regulator of the p38/MAPK14 stress-activated MAPK cascade and of the MAPK8/JNK cascade. In response to DNA damage, involved in the G2/M transition DNA damage checkpoint by activating the p38/MAPK14 stress-activated MAPK cascade, probably by mediating phosphorylation of upstream MAP2K3 and MAP2K6 kinases. Inhibits basal activity of the MAPK8/JNK cascade and diminishes its activation in response to epidermal growth factor (EGF). Positively regulates canonical T cell receptor (TCR) signaling by preventing early PTPN6/SHP1-mediated inactivation of LCK, ensuring sustained TCR signaling that is required for optimal activation and differentiation of T cells. Phosphorylates PTPN6/SHP1 on 'Thr-396', leading to its polyubiquitination and subsequent proteasomal degradation. Required for cell surface expression of metalloprotease ADAM10 on type 1 transitional B cells which is necessary for their NOTCH-mediated development into marginal zone B cells. Also required for the NOTCH-mediated terminal differentiation of splenic conventional type 2 dendritic cells. Positively regulates osteoblast differentiation by acting as an upstream activator of the JNK pathway. Promotes JNK signaling in hepatocytes and positively regulates hepatocyte lipid storage by inhibiting beta-oxidation and triacylglycerol secretion while enhancing lipid synthesis. Restricts age-associated inflammation by negatively regulating differentiation of macrophages and their production of pro-inflammatory cytokines. Plays a role in negatively regulating the abundance of regulatory T cells in white adipose tissue. The protein is Serine/threonine-protein kinase TAO3 (Taok3) of Rattus norvegicus (Rat).